Here is a 476-residue protein sequence, read N- to C-terminus: UDP-N-acetylmuramate--L-alanine ligase (476 aa).

Gly125–Thr131 contributes to the ATP binding site.

It belongs to the MurCDEF family.

The protein resides in the cytoplasm. The catalysed reaction is UDP-N-acetyl-alpha-D-muramate + L-alanine + ATP = UDP-N-acetyl-alpha-D-muramoyl-L-alanine + ADP + phosphate + H(+). It functions in the pathway cell wall biogenesis; peptidoglycan biosynthesis. Cell wall formation. The chain is UDP-N-acetylmuramate--L-alanine ligase from Actinobacillus succinogenes (strain ATCC 55618 / DSM 22257 / CCUG 43843 / 130Z).